Reading from the N-terminus, the 115-residue chain is U3-lycotoxin-Ls1u (115 aa).

The first 20 residues, 1–20 (MKFVLLFGVLLVTLFSYSSA), serve as a signal peptide directing secretion. A propeptide spanning residues 21-44 (EMLDDFDQADEDELLSLIEKEEAR) is cleaved from the precursor. 3 disulfide bridges follow: C48–C63, C55–C72, and C62–C87.

It belongs to the neurotoxin 19 (CSTX) family. 01 subfamily. Expressed by the venom gland.

It localises to the secreted. This is U3-lycotoxin-Ls1u from Lycosa singoriensis (Wolf spider).